The chain runs to 67 residues: Large ribosomal subunit protein bL31 (67 aa).

Zn(2+) contacts are provided by C16, C18, C36, and C39.

This sequence belongs to the bacterial ribosomal protein bL31 family. Type A subfamily. Part of the 50S ribosomal subunit. Zn(2+) serves as cofactor.

Functionally, binds the 23S rRNA. The polypeptide is Large ribosomal subunit protein bL31 (Syntrophomonas wolfei subsp. wolfei (strain DSM 2245B / Goettingen)).